Reading from the N-terminus, the 151-residue chain is Large ribosomal subunit protein bL9 (151 aa).

It belongs to the bacterial ribosomal protein bL9 family.

Binds to the 23S rRNA. This Mycolicibacterium vanbaalenii (strain DSM 7251 / JCM 13017 / BCRC 16820 / KCTC 9966 / NRRL B-24157 / PYR-1) (Mycobacterium vanbaalenii) protein is Large ribosomal subunit protein bL9.